Here is a 355-residue protein sequence, read N- to C-terminus: 3-dehydroquinate synthase (355 aa).

NAD(+) contacts are provided by residues 71–76, 105–109, 129–130, Lys-142, and Lys-151; these read EGEERK, GVVGD, and TS. Residues Glu-184, His-246, and His-263 each contribute to the Zn(2+) site.

Belongs to the sugar phosphate cyclases superfamily. Dehydroquinate synthase family. NAD(+) serves as cofactor. The cofactor is Co(2+). Zn(2+) is required as a cofactor.

Its subcellular location is the cytoplasm. The enzyme catalyses 7-phospho-2-dehydro-3-deoxy-D-arabino-heptonate = 3-dehydroquinate + phosphate. It participates in metabolic intermediate biosynthesis; chorismate biosynthesis; chorismate from D-erythrose 4-phosphate and phosphoenolpyruvate: step 2/7. In terms of biological role, catalyzes the conversion of 3-deoxy-D-arabino-heptulosonate 7-phosphate (DAHP) to dehydroquinate (DHQ). This Streptococcus pneumoniae serotype 4 (strain ATCC BAA-334 / TIGR4) protein is 3-dehydroquinate synthase.